A 432-amino-acid chain; its full sequence is Enolase (432 aa).

A (2R)-2-phosphoglycerate-binding site is contributed by Gln-163. Catalysis depends on Glu-205, which acts as the Proton donor. The Mg(2+) site is built by Asp-241, Glu-289, and Asp-316. Positions 341, 370, 371, and 392 each coordinate (2R)-2-phosphoglycerate. The Proton acceptor role is filled by Lys-341.

The protein belongs to the enolase family. It depends on Mg(2+) as a cofactor.

It localises to the cytoplasm. Its subcellular location is the secreted. It is found in the cell surface. The enzyme catalyses (2R)-2-phosphoglycerate = phosphoenolpyruvate + H2O. It functions in the pathway carbohydrate degradation; glycolysis; pyruvate from D-glyceraldehyde 3-phosphate: step 4/5. Its function is as follows. Catalyzes the reversible conversion of 2-phosphoglycerate (2-PG) into phosphoenolpyruvate (PEP). It is essential for the degradation of carbohydrates via glycolysis. The protein is Enolase of Treponema pallidum (strain Nichols).